Here is a 414-residue protein sequence, read N- to C-terminus: S-adenosylmethionine synthase (414 aa).

His-11 lines the ATP pocket. A Mg(2+)-binding site is contributed by Asp-13. Glu-39 lines the K(+) pocket. 2 residues coordinate L-methionine: Glu-52 and Gln-95. Positions 95–105 (QSPDIAQGVNM) are flexible loop. ATP is bound by residues 169–171 (DGK), 245–246 (KF), Asp-254, 260–261 (RK), Ala-277, and Lys-281. Residue Asp-254 participates in L-methionine binding. An L-methionine-binding site is contributed by Lys-285.

Belongs to the AdoMet synthase family. As to quaternary structure, homotetramer; dimer of dimers. Requires Mg(2+) as cofactor. K(+) is required as a cofactor.

It is found in the cytoplasm. The catalysed reaction is L-methionine + ATP + H2O = S-adenosyl-L-methionine + phosphate + diphosphate. It participates in amino-acid biosynthesis; S-adenosyl-L-methionine biosynthesis; S-adenosyl-L-methionine from L-methionine: step 1/1. In terms of biological role, catalyzes the formation of S-adenosylmethionine (AdoMet) from methionine and ATP. The overall synthetic reaction is composed of two sequential steps, AdoMet formation and the subsequent tripolyphosphate hydrolysis which occurs prior to release of AdoMet from the enzyme. This Synechococcus sp. (strain JA-2-3B'a(2-13)) (Cyanobacteria bacterium Yellowstone B-Prime) protein is S-adenosylmethionine synthase.